The following is a 471-amino-acid chain: Metalloprotease TIKI homolog (471 aa).

An N-terminal signal peptide occupies residues 1–24 (MAAFTLWILVLNVFLLGFQARKLA). The Extracellular segment spans residues 25-449 (SNLKFPIQKC…SRKAAASCTP (425 aa)). N-linked (GlcNAc...) asparagine glycans are attached at residues Asn226, Asn235, Asn284, and Asn342. The segment covering 369–402 (KAKKSLNTRRERRKGCRGRRKKSKRCQKKKKRKR) has biased composition (basic residues). The segment at 369 to 406 (KAKKSLNTRRERRKGCRGRRKKSKRCQKKKKRKRPDYS) is disordered. The chain crosses the membrane as a helical span at residues 450-470 (IWTVSLALTCAVTCLLTYSGF). Position 471 (Arg471) is a topological domain, cytoplasmic.

It belongs to the TIKI family. Mn(2+) serves as cofactor. It depends on Co(2+) as a cofactor.

Its subcellular location is the membrane. In terms of biological role, metalloprotease. This Nematostella vectensis (Starlet sea anemone) protein is Metalloprotease TIKI homolog.